The sequence spans 777 residues: MIVGYRSTIITLSHPKLGNGKTISSNAIFQRSCRVRCSHSTPSSMNGFEDARDRIRESFGKVELSPSSYDTAWVAMVPSKHSLNEPCFPQCLDWIIENQREDGSWGLNPSHPLLLKDSLSSTLACLLALTKWRVGDEQIKRGLGFIETQSWAIDNKDQISPLGFEIIFPSMIKSAEKLNLNLAINKRDSTIKRALQNEFTRNIEYMSEGVGELCDWKEIIKLHQRQNGSLFDSPATTAAALIYHQHDKKCYEYLNSILQQHKNWVPTMYPTKIHSLLCLVDTLQNLGVHRHFKSEIKKALDEIYRLWQQKNEQIFSNVTHCAMAFRLLRMSYYDVSSDELAEFVDEEHFFAISGKYTSHVEILELHKASQLAIDHEKDDILDKINNWTRTFMEQKLLNNGFIDRMSKKEVELALRKFYTISDLAENRRCIKSYEENNFKILKAAYRSPNIYNKDLFIFSIRNFELCQAQHQEELQQFKRWFEDYRLDQLGIAERYIHDTYLCAVIVVPEPELSDARLLYAKYVLLLTIVDDQFDSFASTDECLNIIELVERWDDYASVGYKSEKVKVFFSTLYKSIEELVTIAEIKQGRSVKNHLLNLWLELVKLMLMERVEWFSGKTIPSIEEYLYVTSITFGARLIPLTTQYFLGIKISEDILESDEIYGLCNCTGRVLRILNDLQDSKKEQKEDSVTIVTLLMKSMSEEEAIMKIKEILEMNRRELLKMVLVQKKGSQLPQICKDIFWRTSNWADFIYLQTDGYRIAEEMKNHIDEVFYKPLNH.

The N-terminal 36 residues, 1–36 (MIVGYRSTIITLSHPKLGNGKTISSNAIFQRSCRVR), are a transit peptide targeting the chloroplast. Residues Asp530 and Asp534 each coordinate Mg(2+). Residues 530–534 (DDQFD) carry the DDXXD motif motif.

It belongs to the terpene synthase family. Tpse subfamily. Requires Mg(2+) as cofactor. It depends on Mn(2+) as a cofactor.

It localises to the plastid. It is found in the chloroplast. The catalysed reaction is (2Z,6Z)-farnesyl diphosphate = (+)-alpha-santalene + diphosphate. It catalyses the reaction (2Z,6Z)-farnesyl diphosphate = (+)-endo-beta-bergamotene + diphosphate. The enzyme catalyses (2Z,6Z)-farnesyl diphosphate = (1S,5S,6S)-alpha-bergamotene + diphosphate. (2Z,6Z)-farnesyl diphosphate cyclizing enzyme. Produces (+)-alpha-santalene, (+)-endo-beta-bergamotene, (-)-endo-alpha-bergamotene, and at lower amounts, (-)exo-alpha-bergamotene and (+)-epi-beta-santalene. Not able to use geranyl diphosphate, E,E-farnesyl diphosphate or E,E,E-geranylgeranyl diphosphate as substrates, but able to use Neryl diphosphate to make the monoterpene terpineol. The polypeptide is Santalene and bergamotene synthase, chloroplastic (SBS) (Solanum habrochaites (Wild tomato)).